A 471-amino-acid polypeptide reads, in one-letter code: PE-PGRS family protein PE_PGRS33 (471 aa).

The essential for translocation to the cell surface stretch occupies residues 1-30; the sequence is MSFVVTIPEALAAVATDLAGIGSTIGTANA. The region spanning 1–93 is the PE domain; it reads MSFVVTIPEA…AGSYAAAEAA (93 aa). The interval 140–230 is interacts with TLR2; sequence GNGGAGGSGA…GLFFGVGGAG (91 aa).

It belongs to the mycobacterial PE family. PGRS subfamily. Interacts with human TLR2.

It is found in the secreted. Its subcellular location is the cell wall. The protein localises to the cell surface. The protein resides in the cell outer membrane. Its function is as follows. Induces TNF-alpha release through human Toll-like receptor 2 (TLR2) signaling pathway, leading to macrophage apoptosis. This chain is PE-PGRS family protein PE_PGRS33 (PE_PGRS33), found in Mycobacterium tuberculosis (strain CDC 1551 / Oshkosh).